The primary structure comprises 429 residues: Putative chloride channel protein ClcB-like (429 aa).

The next 11 membrane-spanning stretches (helical) occupy residues 1 to 21 (MLAI…AFRE), 44 to 64 (LPWW…GLTL), 146 to 166 (LLVA…PIAG), 168 to 188 (VFVC…PLLV), 200 to 220 (FFGY…GWEV), 221 to 241 (LTYL…LGLI), 259 to 279 (LALG…VWGN), 283 to 303 (VVNG…VLVC), 315 to 335 (GAVG…GLLY), 354 to 376 (AVVG…ILMI), and 383 to 405 (YQVV…ATGA).

This sequence belongs to the chloride channel (TC 2.A.49) family. ClcB subfamily.

The protein resides in the cell inner membrane. The sequence is that of Putative chloride channel protein ClcB-like from Ralstonia nicotianae (strain ATCC BAA-1114 / GMI1000) (Ralstonia solanacearum).